Here is a 199-residue protein sequence, read N- to C-terminus: MKQSHFFAHLSRLKLINRWPLMRNVLTENVSEHSLQVAMVAHALAAIKNRKFGGNVNAERIALLAMYHDASEVLTGDLPTPVKYFNSQIAQEYKAIEKIAQQKLVDMVPEELRDIFAPLIDEHAYSDEEKSLVKQADALCAYLKCLEELAAGNNEFLLAKTRLEATLEARRSQEMDYFMEVFVPSFHLSLDEISQDSPL.

Substrate-binding positions include 18–19 (RW) and His-33. One can recognise an HD domain in the interval 30 to 142 (VSEHSLQVAM…VKQADALCAY (113 aa)). A divalent metal cation is bound by residues His-33, His-68, and Asp-69. Substrate-binding positions include Asp-69, 77–80 (DLPT), and Asp-137. An a divalent metal cation-binding site is contributed by Asp-137.

This sequence belongs to the 5DNU family. Homodimer. The cofactor is a divalent metal cation.

It localises to the cytoplasm. The catalysed reaction is a 2'-deoxyribonucleoside 5'-phosphate + H2O = a 2'-deoxyribonucleoside + phosphate. In terms of biological role, catalyzes the strictly specific dephosphorylation of 2'-deoxyribonucleoside 5'-monophosphates. The protein is 5'-deoxynucleotidase YfbR of Shigella boydii serotype 18 (strain CDC 3083-94 / BS512).